Here is a 326-residue protein sequence, read N- to C-terminus: ATP synthase gamma chain (326 aa).

It belongs to the ATPase gamma chain family. F-type ATPases have 2 components, CF(1) - the catalytic core - and CF(0) - the membrane proton channel. CF(1) has five subunits: alpha(3), beta(3), gamma(1), delta(1), epsilon(1). CF(0) has three main subunits: a, b and c.

Its subcellular location is the cell membrane. Functionally, produces ATP from ADP in the presence of a proton gradient across the membrane. The gamma chain is believed to be important in regulating ATPase activity and the flow of protons through the CF(0) complex. This is ATP synthase gamma chain from Rhodococcus opacus (strain B4).